The sequence spans 444 residues: ATP-dependent protease ATPase subunit HslU (444 aa).

ATP contacts are provided by residues isoleucine 18, 60-65 (GVGKTE), aspartate 256, glutamate 322, and arginine 394.

This sequence belongs to the ClpX chaperone family. HslU subfamily. In terms of assembly, a double ring-shaped homohexamer of HslV is capped on each side by a ring-shaped HslU homohexamer. The assembly of the HslU/HslV complex is dependent on binding of ATP.

It localises to the cytoplasm. Its function is as follows. ATPase subunit of a proteasome-like degradation complex; this subunit has chaperone activity. The binding of ATP and its subsequent hydrolysis by HslU are essential for unfolding of protein substrates subsequently hydrolyzed by HslV. HslU recognizes the N-terminal part of its protein substrates and unfolds these before they are guided to HslV for hydrolysis. This is ATP-dependent protease ATPase subunit HslU from Klebsiella pneumoniae subsp. pneumoniae (strain ATCC 700721 / MGH 78578).